The chain runs to 697 residues: Methionine--tRNA ligase (697 aa).

A 'HIGH' region motif is present at residues 11 to 21 (PYANGPIHLGH). Zn(2+)-binding residues include cysteine 142, cysteine 145, cysteine 155, and cysteine 158. The 'KMSKS' region motif lies at 343–347 (KMSKS). Position 346 (lysine 346) interacts with ATP. The tRNA-binding domain occupies 595–697 (DFMKVEMTVA…DECKVGDKLA (103 aa)).

Belongs to the class-I aminoacyl-tRNA synthetase family. MetG type 1 subfamily. As to quaternary structure, homodimer. The cofactor is Zn(2+).

The protein localises to the cytoplasm. The catalysed reaction is tRNA(Met) + L-methionine + ATP = L-methionyl-tRNA(Met) + AMP + diphosphate. Functionally, is required not only for elongation of protein synthesis but also for the initiation of all mRNA translation through initiator tRNA(fMet) aminoacylation. This chain is Methionine--tRNA ligase, found in Psychrobacter sp. (strain PRwf-1).